Here is an 83-residue protein sequence, read N- to C-terminus: Consomatin Rs1 (83 aa).

A signal peptide spans 1 to 22 (MQTAYWVMVMMMVWITAPLSEG). Positions 23–55 (GKLNNVIRGLVPDDVTPKRISQSLISRRRFDSR) are excised as a propeptide. Cysteine 62 and cysteine 67 form a disulfide bridge. At tryptophan 64 the chain carries D-tryptophan. Proline 68 bears the 4-hydroxyproline mark. Residues 71-83 (LHGDNYDLKEKDK) constitute a propeptide that is removed on maturation.

This sequence belongs to the conotoxin C superfamily. Consomatin family. Expressed by the venom duct.

The protein resides in the secreted. Its function is as follows. Moderately activates human somatostatin receptors (SSTR) with a preferential activation of SSTR1 and SSTR4. In vivo, does not cause behavioral changes in mice within a few minutes of intracranial injection, but causes a progressive loss of movement thereafter. Four to five hours after injection, mice recover, even with the highest dose tested. Shows antinociception and antihyperalgesia activities in two mouse models of acute pain, most probably by acting outside the central nervous system. This Conus raulsilvai (Sea snail) protein is Consomatin Rs1.